The sequence spans 159 residues: SsrA-binding protein (159 aa).

It belongs to the SmpB family.

Its subcellular location is the cytoplasm. Its function is as follows. Required for rescue of stalled ribosomes mediated by trans-translation. Binds to transfer-messenger RNA (tmRNA), required for stable association of tmRNA with ribosomes. tmRNA and SmpB together mimic tRNA shape, replacing the anticodon stem-loop with SmpB. tmRNA is encoded by the ssrA gene; the 2 termini fold to resemble tRNA(Ala) and it encodes a 'tag peptide', a short internal open reading frame. During trans-translation Ala-aminoacylated tmRNA acts like a tRNA, entering the A-site of stalled ribosomes, displacing the stalled mRNA. The ribosome then switches to translate the ORF on the tmRNA; the nascent peptide is terminated with the 'tag peptide' encoded by the tmRNA and targeted for degradation. The ribosome is freed to recommence translation, which seems to be the essential function of trans-translation. The chain is SsrA-binding protein from Coxiella burnetii (strain RSA 493 / Nine Mile phase I).